The chain runs to 113 residues: uncharacterized protein (113 aa).

An N-terminal signal peptide occupies residues M1 to A38.

This is an uncharacterized protein from Haemophilus influenzae (strain ATCC 51907 / DSM 11121 / KW20 / Rd).